A 326-amino-acid polypeptide reads, in one-letter code: tRNA dimethylallyltransferase (326 aa).

Position 10-17 (10-17 (GPTGTGKT)) interacts with ATP. Residue 12 to 17 (TGTGKT) coordinates substrate. An interaction with substrate tRNA region spans residues 35-38 (DSMQ).

It belongs to the IPP transferase family. Monomer. The cofactor is Mg(2+).

It carries out the reaction adenosine(37) in tRNA + dimethylallyl diphosphate = N(6)-dimethylallyladenosine(37) in tRNA + diphosphate. Functionally, catalyzes the transfer of a dimethylallyl group onto the adenine at position 37 in tRNAs that read codons beginning with uridine, leading to the formation of N6-(dimethylallyl)adenosine (i(6)A). The protein is tRNA dimethylallyltransferase of Dictyoglomus turgidum (strain DSM 6724 / Z-1310).